The chain runs to 183 residues: Translation initiation factor IF-3 (183 aa).

Belongs to the IF-3 family. Monomer.

Its subcellular location is the cytoplasm. In terms of biological role, IF-3 binds to the 30S ribosomal subunit and shifts the equilibrium between 70S ribosomes and their 50S and 30S subunits in favor of the free subunits, thus enhancing the availability of 30S subunits on which protein synthesis initiation begins. The polypeptide is Translation initiation factor IF-3 (Pseudomonas syringae pv. tomato (strain ATCC BAA-871 / DC3000)).